The following is a 113-amino-acid chain: Urease subunit beta (113 aa).

Belongs to the urease beta subunit family. In terms of assembly, heterotrimer of UreA (gamma), UreB (beta) and UreC (alpha) subunits. Three heterotrimers associate to form the active enzyme.

Its subcellular location is the cytoplasm. It catalyses the reaction urea + 2 H2O + H(+) = hydrogencarbonate + 2 NH4(+). It functions in the pathway nitrogen metabolism; urea degradation; CO(2) and NH(3) from urea (urease route): step 1/1. The chain is Urease subunit beta from Nitrosospira multiformis (strain ATCC 25196 / NCIMB 11849 / C 71).